A 247-amino-acid chain; its full sequence is Cell division protein ZapD (247 aa).

It belongs to the ZapD family. In terms of assembly, interacts with FtsZ.

It is found in the cytoplasm. Its function is as follows. Cell division factor that enhances FtsZ-ring assembly. Directly interacts with FtsZ and promotes bundling of FtsZ protofilaments, with a reduction in FtsZ GTPase activity. The protein is Cell division protein ZapD of Shigella flexneri.